Consider the following 463-residue polypeptide: A-type ATP synthase subunit B (463 aa).

The protein belongs to the ATPase alpha/beta chains family. As to quaternary structure, has multiple subunits with at least A(3), B(3), C, D, E, F, H, I and proteolipid K(x).

The protein localises to the cell membrane. Functionally, component of the A-type ATP synthase that produces ATP from ADP in the presence of a proton gradient across the membrane. The B chain is a regulatory subunit. The sequence is that of A-type ATP synthase subunit B from Saccharolobus islandicus (strain Y.N.15.51 / Yellowstone #2) (Sulfolobus islandicus).